We begin with the raw amino-acid sequence, 396 residues long: S-adenosylmethionine synthase (396 aa).

Residue H16 coordinates ATP. Position 18 (D18) interacts with Mg(2+). E44 provides a ligand contact to K(+). L-methionine is bound by residues E57 and Q100. The segment at 100–110 is flexible loop; that stretch reads QSVDIAQGVDR. Residues 165 to 167, D240, 246 to 247, A263, and K267 contribute to the ATP site; these read DAK and RK. Residue D240 participates in L-methionine binding. L-methionine is bound at residue K271.

The protein belongs to the AdoMet synthase family. In terms of assembly, homotetramer; dimer of dimers. Mg(2+) serves as cofactor. The cofactor is K(+).

It is found in the cytoplasm. It carries out the reaction L-methionine + ATP + H2O = S-adenosyl-L-methionine + phosphate + diphosphate. It participates in amino-acid biosynthesis; S-adenosyl-L-methionine biosynthesis; S-adenosyl-L-methionine from L-methionine: step 1/1. Functionally, catalyzes the formation of S-adenosylmethionine (AdoMet) from methionine and ATP. The overall synthetic reaction is composed of two sequential steps, AdoMet formation and the subsequent tripolyphosphate hydrolysis which occurs prior to release of AdoMet from the enzyme. The polypeptide is S-adenosylmethionine synthase (Pseudomonas putida (strain W619)).